The sequence spans 163 residues: Lipoprotein signal peptidase (163 aa).

3 helical membrane-spanning segments follow: residues 11–31, 63–83, and 88–108; these read ILIAVFVVIFDQVTKYIIATT, KMTFFFIITIIILIALVYFFI, and YNLFMQVAISLLFAGALGNFI. Active-site residues include Asp-118 and Asp-136. A helical membrane pass occupies residues 131-151; that stretch reads IFNIADSSLTIGVILIIIALL.

Belongs to the peptidase A8 family.

The protein localises to the cell membrane. The catalysed reaction is Release of signal peptides from bacterial membrane prolipoproteins. Hydrolyzes -Xaa-Yaa-Zaa-|-(S,diacylglyceryl)Cys-, in which Xaa is hydrophobic (preferably Leu), and Yaa (Ala or Ser) and Zaa (Gly or Ala) have small, neutral side chains.. Its pathway is protein modification; lipoprotein biosynthesis (signal peptide cleavage). This protein specifically catalyzes the removal of signal peptides from prolipoproteins. The chain is Lipoprotein signal peptidase from Staphylococcus aureus.